We begin with the raw amino-acid sequence, 235 residues long: MYSVTINQRVEAIKNNEEEINLFVEEYKPFIAACTQKVVGRYVAYGQDDELSIALMAFVETIRSYDVSKGNFLSFSQNVIKRRIIDYYRKEKKHSVVVNINGHLEDEEEETDLGIAMSIDKYSEEEISEYRRLELEQLKKELKEWDISFFDLVNISPKHKRTKKIYSKIIKFVLSRPDIMEKIKQKKYLPVAEIEQSLKIPRKTIERARKYIITVVIIFTGDYEFIRDYVNWEVE.

The Polymerase core binding motif lies at 49–62; that stretch reads DELSIALMAFVETI. The segment at residues 191–210 is a DNA-binding region (H-T-H motif); that stretch reads VAEIEQSLKIPRKTIERARK.

This sequence belongs to the sigma-70 factor family. SigI subfamily. In terms of assembly, interacts with RsgI7.

It localises to the cytoplasm. Negatively regulated by the anti-sigma-I factor RsgI7. Its function is as follows. Sigma factors are initiation factors that promote the attachment of RNA polymerase to specific initiation sites and are then released. In Acetivibrio thermocellus (strain ATCC 27405 / DSM 1237 / JCM 9322 / NBRC 103400 / NCIMB 10682 / NRRL B-4536 / VPI 7372) (Clostridium thermocellum), this protein is RNA polymerase sigma factor SigI7.